The chain runs to 537 residues: Membrane protein insertase YidC (537 aa).

The next 4 membrane-spanning stretches (helical) occupy residues 5-25 (LIIA…IFPT), 353-373 (GNYG…FFPL), 418-438 (VNPL…FGLY), and 495-515 (MLML…GLVI).

This sequence belongs to the OXA1/ALB3/YidC family. Type 1 subfamily. As to quaternary structure, interacts with the Sec translocase complex via SecD. Specifically interacts with transmembrane segments of nascent integral membrane proteins during membrane integration.

It localises to the cell inner membrane. Required for the insertion and/or proper folding and/or complex formation of integral membrane proteins into the membrane. Involved in integration of membrane proteins that insert both dependently and independently of the Sec translocase complex, as well as at least some lipoproteins. Aids folding of multispanning membrane proteins. This is Membrane protein insertase YidC from Citrifermentans bemidjiense (strain ATCC BAA-1014 / DSM 16622 / JCM 12645 / Bem) (Geobacter bemidjiensis).